We begin with the raw amino-acid sequence, 129 residues long: Large ribosomal subunit protein bL12 (129 aa).

Belongs to the bacterial ribosomal protein bL12 family. As to quaternary structure, homodimer. Part of the ribosomal stalk of the 50S ribosomal subunit. Forms a multimeric L10(L12)X complex, where L10 forms an elongated spine to which 2 to 4 L12 dimers bind in a sequential fashion. Binds GTP-bound translation factors.

In terms of biological role, forms part of the ribosomal stalk which helps the ribosome interact with GTP-bound translation factors. Is thus essential for accurate translation. This Mycobacteroides abscessus (strain ATCC 19977 / DSM 44196 / CCUG 20993 / CIP 104536 / JCM 13569 / NCTC 13031 / TMC 1543 / L948) (Mycobacterium abscessus) protein is Large ribosomal subunit protein bL12.